A 753-amino-acid polypeptide reads, in one-letter code: 5-methyltetrahydropteroyltriglutamate--homocysteine methyltransferase (753 aa).

5-methyltetrahydropteroyltri-L-glutamate is bound by residues 17 to 20 and Lys117; that span reads RELK. Residues 431 to 433 and Glu484 contribute to the L-homocysteine site; that span reads IGS. L-methionine contacts are provided by residues 431–433 and Glu484; that span reads IGS. 5-methyltetrahydropteroyltri-L-glutamate is bound by residues 515-516 and Trp561; that span reads RC. Asp599 contributes to the L-homocysteine binding site. Position 599 (Asp599) interacts with L-methionine. Glu605 is a 5-methyltetrahydropteroyltri-L-glutamate binding site. Zn(2+) contacts are provided by His641, Cys643, and Glu665. The active-site Proton donor is the His694. Residue Cys726 participates in Zn(2+) binding.

It belongs to the vitamin-B12 independent methionine synthase family. It depends on Zn(2+) as a cofactor.

The enzyme catalyses 5-methyltetrahydropteroyltri-L-glutamate + L-homocysteine = tetrahydropteroyltri-L-glutamate + L-methionine. It participates in amino-acid biosynthesis; L-methionine biosynthesis via de novo pathway; L-methionine from L-homocysteine (MetE route): step 1/1. Its function is as follows. Catalyzes the transfer of a methyl group from 5-methyltetrahydrofolate to homocysteine resulting in methionine formation. This is 5-methyltetrahydropteroyltriglutamate--homocysteine methyltransferase from Shigella sonnei (strain Ss046).